The sequence spans 398 residues: Mu-type opioid receptor (398 aa).

The Extracellular segment spans residues 1–66 (MDSSTGPGNT…CPQTGSPSMV (66 aa)). N-linked (GlcNAc...) asparagine glycosylation is found at N9, N31, N38, N46, and N53. Residues 67–91 (TAITIMALYSIVCVVGLFGNFLVMY) traverse the membrane as a helical segment. Over 92-104 (VIVRYTKMKTATN) the chain is Cytoplasmic. A helical membrane pass occupies residues 105–129 (IYIFNLALADALATSTLPFQSVNYL). At 130-140 (MGTWPFGTILC) the chain is on the extracellular side. A disulfide bond links C140 and C217. Residues 141–163 (KIVISIDYYNMFTSIFTLCTMSV) traverse the membrane as a helical segment. Over 164–183 (DRYIAVCHPVKALDFRTPRN) the chain is Cytoplasmic. A Phosphotyrosine modification is found at Y166. Residues 184–205 (AKIVNVCNWILSSAIGLPVMFM) form a helical membrane-spanning segment. Over 206-228 (ATTKYRQGSIDCTLTFSHPTWYW) the chain is Extracellular. Residues 229-253 (ENLLKICVFIFAFIMPVLIITVCYG) form a helical membrane-spanning segment. Over 254–277 (LMILRLKSVRMLSGSKEKDRNLRR) the chain is Cytoplasmic. A helical transmembrane segment spans residues 278 to 304 (ITRMVLVVVAVFIVCWTPIHIYVIIKA). Topologically, residues 305–312 (LITIPETT) are extracellular. Residues 313–336 (FQTVSWHFCIALGYTNSCLNPVLY) form a helical membrane-spanning segment. Residues 332-336 (NPVLY) carry the NPxxY; plays a role in stabilizing the activated conformation of the receptor motif. The Cytoplasmic segment spans residues 337-398 (AFLDENFKRC…NLEAETAPLP (62 aa)). C351 carries the S-palmitoyl cysteine lipid modification. Residues 361–385 (QNSTRVRQNTREHPSTANTVDRTNH) are disordered. S363 is modified (phosphoserine). The residue at position 370 (T370) is a Phosphothreonine. S375 is modified (phosphoserine). T394 carries the post-translational modification Phosphothreonine.

Belongs to the G-protein coupled receptor 1 family. As to quaternary structure, forms homooligomers and heterooligomers with other GPCRs, such as OPRD1, OPRK1, OPRL1, NPFFR2, ADRA2A, SSTR2, CNR1 and CCR5 (probably in dimeric forms). Interacts with heterotrimeric G proteins; interaction with a heterotrimeric complex containing GNAI1, GNB1 and GNG2 stabilizes the active conformation of the receptor and increases its affinity for endomorphin-2, the synthetic opioid peptide DAMGO and for morphinan agonists. Interacts with PPL; the interaction disrupts agonist-mediated G-protein activation. Interacts (via C-terminus) with DNAJB4 (via C-terminus). Interacts with calmodulin; the interaction inhibits the constitutive activity of OPRM1; it abolishes basal and attenuates agonist-stimulated G-protein coupling. Interacts with FLNA, PLD2, RANBP9 and WLS and GPM6A. Interacts with RTP4. Interacts with SYP and GNAS. Interacts with RGS9, RGS17, RGS20, RGS4, PPP1R9B and HINT1. Phosphorylated. Differentially phosphorylated in basal and agonist-induced conditions. Agonist-mediated phosphorylation modulates receptor internalization. Phosphorylated by GRK2 in a agonist-dependent manner. Phosphorylation at Tyr-166 requires receptor activation, is dependent on non-receptor protein tyrosine kinase Src and results in a decrease in agonist efficacy by reducing G-protein coupling efficiency. Phosphorylated on tyrosine residues; the phosphorylation is involved in agonist-induced G-protein-independent receptor down-regulation. Phosphorylation at Ser-375 is involved in G-protein-dependent but not beta-arrestin-dependent activation of the ERK pathway. Post-translationally, ubiquitinated. A basal ubiquitination seems not to be related to degradation. Ubiquitination is increased upon formation of OPRM1:OPRD1 oligomers leading to proteasomal degradation; the ubiquitination is diminished by RTP4. In terms of tissue distribution, brain. Is expressed in the cerebral cortex, caudate putamen, nucleus accumbens, septal nuclei, thalamus, hippocampus, and habenula. Not detected in cerebellum.

The protein localises to the cell membrane. The protein resides in the cell projection. Its subcellular location is the axon. It is found in the perikaryon. It localises to the dendrite. The protein localises to the endosome. Receptor for endogenous opioids such as beta-endorphin and endomorphin. Receptor for natural and synthetic opioids including morphine, heroin, DAMGO, fentanyl, etorphine, buprenorphin and methadone. Also activated by enkephalin peptides, such as Met-enkephalin or Met-enkephalin-Arg-Phe, with higher affinity for Met-enkephalin-Arg-Phe. Agonist binding to the receptor induces coupling to an inactive GDP-bound heterotrimeric G-protein complex and subsequent exchange of GDP for GTP in the G-protein alpha subunit leading to dissociation of the G-protein complex with the free GTP-bound G-protein alpha and the G-protein beta-gamma dimer activating downstream cellular effectors. The agonist- and cell type-specific activity is predominantly coupled to pertussis toxin-sensitive G(i) and G(o) G alpha proteins, GNAI1, GNAI2, GNAI3 and GNAO1 isoforms Alpha-1 and Alpha-2, and to a lesser extent to pertussis toxin-insensitive G alpha proteins GNAZ and GNA15. They mediate an array of downstream cellular responses, including inhibition of adenylate cyclase activity and both N-type and L-type calcium channels, activation of inward rectifying potassium channels, mitogen-activated protein kinase (MAPK), phospholipase C (PLC), phosphoinositide/protein kinase (PKC), phosphoinositide 3-kinase (PI3K) and regulation of NF-kappa-B. Also couples to adenylate cyclase stimulatory G alpha proteins. The selective temporal coupling to G-proteins and subsequent signaling can be regulated by RGSZ proteins, such as RGS9, RGS17 and RGS4. Phosphorylation by members of the GPRK subfamily of Ser/Thr protein kinases and association with beta-arrestins is involved in short-term receptor desensitization. Beta-arrestins associate with the GPRK-phosphorylated receptor and uncouple it from the G-protein thus terminating signal transduction. The phosphorylated receptor is internalized through endocytosis via clathrin-coated pits which involves beta-arrestins. The activation of the ERK pathway occurs either in a G-protein-dependent or a beta-arrestin-dependent manner and is regulated by agonist-specific receptor phosphorylation. Acts as a class A G-protein coupled receptor (GPCR) which dissociates from beta-arrestin at or near the plasma membrane and undergoes rapid recycling. Receptor down-regulation pathways are varying with the agonist and occur dependent or independent of G-protein coupling. Endogenous ligands induce rapid desensitization, endocytosis and recycling. Heterooligomerization with other GPCRs can modulate agonist binding, signaling and trafficking properties. The chain is Mu-type opioid receptor (Oprm1) from Rattus norvegicus (Rat).